A 130-amino-acid chain; its full sequence is Small ribosomal subunit protein uS11 (130 aa).

It belongs to the universal ribosomal protein uS11 family. Part of the 30S ribosomal subunit. Interacts with proteins S7 and S18. Binds to IF-3.

Located on the platform of the 30S subunit, it bridges several disparate RNA helices of the 16S rRNA. Forms part of the Shine-Dalgarno cleft in the 70S ribosome. The sequence is that of Small ribosomal subunit protein uS11 from Prochlorococcus marinus (strain MIT 9312).